The sequence spans 240 residues: tRNA (guanine-N(1)-)-methyltransferase (240 aa).

Residues Gly111 and Ile130–Ile135 contribute to the S-adenosyl-L-methionine site.

Belongs to the RNA methyltransferase TrmD family. As to quaternary structure, homodimer.

The protein localises to the cytoplasm. It carries out the reaction guanosine(37) in tRNA + S-adenosyl-L-methionine = N(1)-methylguanosine(37) in tRNA + S-adenosyl-L-homocysteine + H(+). Functionally, specifically methylates guanosine-37 in various tRNAs. The polypeptide is tRNA (guanine-N(1)-)-methyltransferase (Mycoplasma mycoides subsp. mycoides SC (strain CCUG 32753 / NCTC 10114 / PG1)).